The chain runs to 203 residues: NAD(P)H-quinone oxidoreductase subunit I (203 aa).

4Fe-4S ferredoxin-type domains follow at residues 55–84 and 95–124; these read GRIH…VDWE and KHYS…MTEE. Positions 64, 67, 70, 74, 104, 107, 110, and 114 each coordinate [4Fe-4S] cluster.

This sequence belongs to the complex I 23 kDa subunit family. As to quaternary structure, NDH-1 is composed of at least 11 different subunits. The cofactor is [4Fe-4S] cluster.

It is found in the cellular thylakoid membrane. The enzyme catalyses a plastoquinone + NADH + (n+1) H(+)(in) = a plastoquinol + NAD(+) + n H(+)(out). The catalysed reaction is a plastoquinone + NADPH + (n+1) H(+)(in) = a plastoquinol + NADP(+) + n H(+)(out). Its function is as follows. NDH-1 shuttles electrons from an unknown electron donor, via FMN and iron-sulfur (Fe-S) centers, to quinones in the respiratory and/or the photosynthetic chain. The immediate electron acceptor for the enzyme in this species is believed to be plastoquinone. Couples the redox reaction to proton translocation, and thus conserves the redox energy in a proton gradient. This is NAD(P)H-quinone oxidoreductase subunit I (ndhI) from Picosynechococcus sp. (strain ATCC 27264 / PCC 7002 / PR-6) (Agmenellum quadruplicatum).